The chain runs to 580 residues: MAKMRVRFPTLVLLLGIVFLMAVSIGIAYGEKNVLKNHERPQEREQEERDPRQQPRPHHQEEQEREHRRESEESQEEEREQRREPRREREQEQQPQHGRREEEEEWQPRRQRPQSRREEREQEQGSSSSSRRQSGYERREQREEREQEQEQGSRSDSRRQRNPYYFSSERFQTLYRNRNGQIRVLERFDQRTNRLENLQNYRIVEFQSKPNTLILPKHSDADYILVVLNGSATITIVNPDKRQSYNLENGDALRLPAGTTSYILNPDDNQNLRVVKLAIPINNPGNFYDFYPSSSKDQQSYFSGFSKNTLEATFNTRYEEIQSILLGNEDEQEDDEQWHGQEQSHQDEGVIVRVSKEQVQELRKYAQSSSRKGKPYESGPFNLRSNKPIYSNKFGNFYEITPDRNPQAQDLDISLTFIEINEGALLLPHYNSKAIFVVVVDEGEGNYELVGIRDQQRQQDEQEVRRYSARLSEGDIFVIPAGHPISINASSNLRLLGFGINADENQRNFLAGSEDNVIRQLDREVKGLIFPGSAEDVERLIKNQQQSYFANAQPQQQQQREREGRHGRRGHISSILSTLY.

A signal peptide spans 1-30 (MAKMRVRFPTLVLLLGIVFLMAVSIGIAYG). Composition is skewed to basic and acidic residues over residues 37–72 (NHER…RESE) and 79–92 (REQR…REQE). The disordered stretch occupies residues 37 to 165 (NHERPQEREQ…DSRRQRNPYY (129 aa)). The segment covering 124–133 (QGSSSSSRRQ) has biased composition (low complexity). The span at 134 to 145 (SGYERREQREER) shows a compositional bias: basic and acidic residues. Cupin type-1 domains are found at residues 164–322 (YYFS…EEIQ) and 381–538 (FNLR…EDVE). N-linked (GlcNAc...) asparagine glycans are attached at residues Asn229 and Asn488. The segment at 549–569 (FANAQPQQQQQREREGRHGRR) is disordered.

It belongs to the 7S seed storage protein family. Component of globulins complexes which accumulate in seeds.

In terms of biological role, seed storage protein. Accumulates during seed development and is hydrolyzed after germination to provide a carbon and nitrogen source for the developing seedling. In Lupinus angustifolius (Narrow-leaved blue lupine), this protein is Conglutin beta 3.